Reading from the N-terminus, the 268-residue chain is Indole-3-glycerol phosphate synthase (268 aa).

The protein belongs to the TrpC family.

It carries out the reaction 1-(2-carboxyphenylamino)-1-deoxy-D-ribulose 5-phosphate + H(+) = (1S,2R)-1-C-(indol-3-yl)glycerol 3-phosphate + CO2 + H2O. It functions in the pathway amino-acid biosynthesis; L-tryptophan biosynthesis; L-tryptophan from chorismate: step 4/5. This Acinetobacter baumannii (strain AB0057) protein is Indole-3-glycerol phosphate synthase.